Consider the following 257-residue polypeptide: MATVVIKIGGSTLEALEEGFYEGVVKRASLGDKIMIVHGGGPAINNLLQAMAVESQFVNGLRKTTAEVLTAAETALSGQINKQLVRSLYQAGGKAIGLSGSDGHLLKTIPIDTDKLGFVGAVESVNVDVLFNVAKAGYIPVIAPIGMDANYQPYNINADTAAAAVAKASKAEELVFVTDVDGVQKDGKVIKEMDEVLAKHYIEEGVIYGGMVPKVNACLDSLSGALTKARIVNGKKAYHPSAGTAIVKQSNVLTSGA.

Residues 40–41, Arg62, and Asn155 each bind substrate; that span reads GG.

It belongs to the acetylglutamate kinase family. ArgB subfamily.

The protein resides in the cytoplasm. It catalyses the reaction N-acetyl-L-glutamate + ATP = N-acetyl-L-glutamyl 5-phosphate + ADP. It functions in the pathway amino-acid biosynthesis; L-arginine biosynthesis; N(2)-acetyl-L-ornithine from L-glutamate: step 2/4. In terms of biological role, catalyzes the ATP-dependent phosphorylation of N-acetyl-L-glutamate. The protein is Acetylglutamate kinase of Shouchella clausii (strain KSM-K16) (Alkalihalobacillus clausii).